The chain runs to 114 residues: Iron-sulfur cluster insertion protein ErpA (114 aa).

3 residues coordinate iron-sulfur cluster: Cys42, Cys106, and Cys108.

It belongs to the HesB/IscA family. As to quaternary structure, homodimer. It depends on iron-sulfur cluster as a cofactor.

Its function is as follows. Required for insertion of 4Fe-4S clusters for at least IspG. In Salmonella typhi, this protein is Iron-sulfur cluster insertion protein ErpA.